The chain runs to 440 residues: MENIQKLIARYPLVEDLVALKETTWFNPGATSLAQGLPYVGLTEQDVNAAHDRLARFAPYLAKAFPQTAAAGGMIESDVVAIPAMQKRLEKEYGQTIDGEMLLKKDSHLAISGSIKARGGIYEVLTHAEKLALEAGLLTTDDDYSVLLSPEFKQFFSQYSIAVGSTGNLGLSIGIMSACIGFKVTVHMSADARAWKKAKLRSHGVTVVEYEDDYGVAVEQGRKAAQSDPNCFFIDDENSRTLFLGYAVAGQRLKAQFAQQGRVVDASHPLFVYLPCGVGGGPGGVAFGLKLAFGDNVHCFFAEPTHSPCMLLGVYTGLHDAISVQDIGIDNLTAADGLAVGRASGFVGRAMERLLDGLYTLDDQTMYDMLGWLAQEEGIRLEPSALAGMAGPQRICAAAEYQQRHGFSQTQLGNATHLVWATGGGMVPEDEMEQYLAKGR.

At lysine 116 the chain carries N6-(pyridoxal phosphate)lysine.

This sequence belongs to the serine/threonine dehydratase family. DsdA subfamily. As to quaternary structure, monomer. The cofactor is pyridoxal 5'-phosphate.

It carries out the reaction D-serine = pyruvate + NH4(+). This chain is D-serine dehydratase, found in Salmonella agona (strain SL483).